Here is a 461-residue protein sequence, read N- to C-terminus: Cysteine--tRNA ligase (461 aa).

Cys-28 is a binding site for Zn(2+). A 'HIGH' region motif is present at residues 30–40; sequence ITVYDLCHIGH. Zn(2+)-binding residues include Cys-209, His-234, and Glu-238. The 'KMSKS' region motif lies at 266-270; it reads KMSKS. Lys-269 is an ATP binding site.

It belongs to the class-I aminoacyl-tRNA synthetase family. Monomer. Requires Zn(2+) as cofactor.

It is found in the cytoplasm. It carries out the reaction tRNA(Cys) + L-cysteine + ATP = L-cysteinyl-tRNA(Cys) + AMP + diphosphate. This Escherichia coli O157:H7 protein is Cysteine--tRNA ligase.